A 459-amino-acid chain; its full sequence is Cobyrinate a,c-diamide synthase (459 aa).

The GATase cobBQ-type domain maps to R249–G446. The active-site Nucleophile is C332.

It belongs to the CobB/CbiA family. Mg(2+) serves as cofactor.

The enzyme catalyses cob(II)yrinate + 2 L-glutamine + 2 ATP + 2 H2O = cob(II)yrinate a,c diamide + 2 L-glutamate + 2 ADP + 2 phosphate + 2 H(+). It participates in cofactor biosynthesis; adenosylcobalamin biosynthesis; cob(II)yrinate a,c-diamide from sirohydrochlorin (anaerobic route): step 10/10. Functionally, catalyzes the ATP-dependent amidation of the two carboxylate groups at positions a and c of cobyrinate, using either L-glutamine or ammonia as the nitrogen source. The polypeptide is Cobyrinate a,c-diamide synthase (Syntrophotalea carbinolica (strain DSM 2380 / NBRC 103641 / GraBd1) (Pelobacter carbinolicus)).